We begin with the raw amino-acid sequence, 191 residues long: MEYFDMRKMSVNLWRNAAGETREICTFPPAKRDFYWRASITSIAANGEFSLFPGMERIVTLLEGGEMFLESADRFNHTLKPLQPFSFAADLVVKAKLTAGQMSMDFNIMTRLDVCKAKVRIAERTFTTFGSRGGVVFVINGAWQLGDKLLTTDQGACWFDGRHTLRLLQPQGKLLFSEINWLAGHSPDQVQ.

The protein belongs to the Ves family.

The sequence is that of Protein Ves from Escherichia coli (strain UTI89 / UPEC).